A 516-amino-acid chain; its full sequence is 2-isopropylmalate synthase (516 aa).

The 263-residue stretch at 5–267 (VIIFDTTLRD…TTGIKHDEIS (263 aa)) folds into the Pyruvate carboxyltransferase domain. Mn(2+) is bound by residues aspartate 14, histidine 202, histidine 204, and asparagine 238. A regulatory domain region spans residues 392-516 (KLNYLSVQSG…IKQKKSVATV (125 aa)).

The protein belongs to the alpha-IPM synthase/homocitrate synthase family. LeuA type 1 subfamily. Homodimer. It depends on Mn(2+) as a cofactor.

It localises to the cytoplasm. The catalysed reaction is 3-methyl-2-oxobutanoate + acetyl-CoA + H2O = (2S)-2-isopropylmalate + CoA + H(+). It participates in amino-acid biosynthesis; L-leucine biosynthesis; L-leucine from 3-methyl-2-oxobutanoate: step 1/4. Its function is as follows. Catalyzes the condensation of the acetyl group of acetyl-CoA with 3-methyl-2-oxobutanoate (2-ketoisovalerate) to form 3-carboxy-3-hydroxy-4-methylpentanoate (2-isopropylmalate). The protein is 2-isopropylmalate synthase of Vibrio cholerae serotype O1 (strain ATCC 39315 / El Tor Inaba N16961).